The sequence spans 84 residues: U21-theraphotoxin-Cg1a 3 (84 aa).

The N-terminal stretch at 1-21 (MKVSVLITLAVLGVMFLLTSA) is a signal peptide. Positions 22-47 (EERGSDQMDSPAWLKSMERIFQSEER) are excised as a propeptide. Intrachain disulfides connect Cys-49–Cys-63, Cys-56–Cys-68, and Cys-62–Cys-76. Val-82 is subject to Valine amide.

Belongs to the neurotoxin 10 (Hwtx-1) family. 05 (F4a) subfamily. As to expression, expressed by the venom gland.

The protein localises to the secreted. Functionally, probable ion channel inhibitor. The sequence is that of U21-theraphotoxin-Cg1a 3 from Chilobrachys guangxiensis (Chinese earth tiger tarantula).